The chain runs to 176 residues: Membrane glycoprotein UL144 (176 aa).

Positions 1–20 (MKPLVMLICFGVILLQLGVT) are cleaved as a signal peptide. The TNFR-Cys repeat unit spans residues 58–95 (PCPNGTYVSGLYNCTDCTQCNVTQVMIRNCTSTNNTVC). Intrachain disulfides connect C59/C71, C74/C87, and C77/C95. The chain crosses the membrane as a helical span at residues 134–154 (LAWLSLFIFLVGIILLILYLI).

As to quaternary structure, interacts with host TRIM23; this interaction causes auto-ubiquitination of TRAF6, leading to NF-kappaB activation.

It is found in the membrane. Functionally, activates NF-kappa-B in a tumor necrosis factor receptor (TNFR)-associated factor 6 (TRAF6)-dependent manner, causing the up-regulation of the chemokine CCL22. This chain is Membrane glycoprotein UL144 (UL144), found in Human cytomegalovirus (strain Merlin) (HHV-5).